The primary structure comprises 159 residues: Putative ribosomal RNA large subunit methyltransferase H (159 aa).

Residues Leu-76, Gly-108, and Phe-127–Phe-132 contribute to the S-adenosyl-L-methionine site.

This sequence belongs to the RNA methyltransferase RlmH family.

The protein resides in the cytoplasm. The enzyme catalyses pseudouridine(1915) in 23S rRNA + S-adenosyl-L-methionine = N(3)-methylpseudouridine(1915) in 23S rRNA + S-adenosyl-L-homocysteine + H(+). Its function is as follows. Specifically methylates the pseudouridine at position 1915 (m3Psi1915) in 23S rRNA. This Methanococcus vannielii (strain ATCC 35089 / DSM 1224 / JCM 13029 / OCM 148 / SB) protein is Putative ribosomal RNA large subunit methyltransferase H.